Here is a 261-residue protein sequence, read N- to C-terminus: Tryptophan synthase alpha chain (261 aa).

Catalysis depends on proton acceptor residues Glu47 and Asp58.

This sequence belongs to the TrpA family. In terms of assembly, tetramer of two alpha and two beta chains.

The catalysed reaction is (1S,2R)-1-C-(indol-3-yl)glycerol 3-phosphate + L-serine = D-glyceraldehyde 3-phosphate + L-tryptophan + H2O. It functions in the pathway amino-acid biosynthesis; L-tryptophan biosynthesis; L-tryptophan from chorismate: step 5/5. Functionally, the alpha subunit is responsible for the aldol cleavage of indoleglycerol phosphate to indole and glyceraldehyde 3-phosphate. In Neisseria meningitidis serogroup B (strain ATCC BAA-335 / MC58), this protein is Tryptophan synthase alpha chain.